Reading from the N-terminus, the 115-residue chain is Large ribosomal subunit protein bL20c (115 aa).

It belongs to the bacterial ribosomal protein bL20 family.

It is found in the plastid. The protein localises to the chloroplast. Its function is as follows. Binds directly to 23S ribosomal RNA and is necessary for the in vitro assembly process of the 50S ribosomal subunit. It is not involved in the protein synthesizing functions of that subunit. This is Large ribosomal subunit protein bL20c from Physcomitrium patens (Spreading-leaved earth moss).